We begin with the raw amino-acid sequence, 387 residues long: Methionine aminopeptidase 1 (387 aa).

Residue S2 is modified to N-acetylserine. The propeptide occupies 2–10 (STATTTVTT). A C6H2-type zinc finger spans residues 19–73 (KIYCSGLQCGRETSSQMKCPVCLKQGIVSIFCDTSCYENNYKAHKALHNAKDGLE). Residues C22, C27, C37, C40, C50, C54, H62, and H66 each coordinate Zn(2+). Position 202 (H202) interacts with a protein. Positions 219, 230, and 294 each coordinate Zn(2+). An a protein-binding site is contributed by H301. E327 and E358 together coordinate Zn(2+).

This sequence belongs to the peptidase M24A family. Methionine aminopeptidase type 1 subfamily. Associates with the 60S ribosomal subunit of the 80S translational complex. Zn(2+) is required as a cofactor. Requires Co(2+) as cofactor. It depends on Mn(2+) as a cofactor. Fe(2+) serves as cofactor.

The protein localises to the cytoplasm. The catalysed reaction is Release of N-terminal amino acids, preferentially methionine, from peptides and arylamides.. With respect to regulation, in contract to the MetAP 2 isoform, is not inhibited by the fungal metabolite fumagillin, an antiangiogenic drug. Its function is as follows. Cotranslationally removes the N-terminal methionine from nascent proteins. The N-terminal methionine is often cleaved when the second residue in the primary sequence is small and uncharged (Met-Ala-, Cys, Gly, Pro, Ser, Thr, or Val). Plays the major role in N-terminal methionine removal. Less efficient when the second residue is Val. The sequence is that of Methionine aminopeptidase 1 (MAP1) from Saccharomyces cerevisiae (strain ATCC 204508 / S288c) (Baker's yeast).